Consider the following 124-residue polypeptide: Small ribosomal subunit protein uS12 (124 aa).

Aspartate 89 bears the 3-methylthioaspartic acid mark.

Belongs to the universal ribosomal protein uS12 family. In terms of assembly, part of the 30S ribosomal subunit. Contacts proteins S8 and S17. May interact with IF1 in the 30S initiation complex.

In terms of biological role, with S4 and S5 plays an important role in translational accuracy. Interacts with and stabilizes bases of the 16S rRNA that are involved in tRNA selection in the A site and with the mRNA backbone. Located at the interface of the 30S and 50S subunits, it traverses the body of the 30S subunit contacting proteins on the other side and probably holding the rRNA structure together. The combined cluster of proteins S8, S12 and S17 appears to hold together the shoulder and platform of the 30S subunit. This chain is Small ribosomal subunit protein uS12, found in Moorella thermoacetica (strain ATCC 39073 / JCM 9320).